The chain runs to 335 residues: MNGAIGGDLLLNFPDMSVLERQRAHLKYLNPTFDSPLAGFFADSSMITGGEMDSYLSTAGLNLPMMYGETTVEGDSRLSISPETTLGTGNFKKRKFDTETKDCNEKKKKMTMNRDDLVEEGEEEKSKITEQNNGSTKSIKKMKHKAKKEENNFSNDSSKVTKELEKTDYIHVRARRGQATDSHSIAERVRREKISERMKFLQDLVPGCDKITGKAGMLDEIINYVQSLQRQIEFLSMKLAIVNPRPDFDMDDIFAKEVASTPMTVVPSPEMVLSGYSHEMVHSGYSSEMVNSGYLHVNPMQQVNTSSDPLSCFNNGEAPSMWDSHVQNLYGNLGV.

A disordered region spans residues methionine 110–valine 160. Positions glutamine 178–leucine 228 constitute a bHLH domain.

In terms of assembly, homodimer. Interacts with IBH1. Binds reversibly to CRY2 after blue light illumination. In terms of tissue distribution, expressed constitutively in roots, leaves, and stems.

The protein localises to the nucleus. Transcription factor that binds DNA to G box 5'-CACGTG-3' and, to a lower extent, to E-box 5'-CANNTG-3' in vitro. Binds to chromatin DNA of the FT gene and promotes its expression, and thus triggers flowering in response to blue light. This chain is Transcription factor bHLH63 (BHLH63), found in Arabidopsis thaliana (Mouse-ear cress).